The primary structure comprises 48 residues: Large ribosomal subunit protein bL34c (48 aa).

Residues 18-48 (SGFRSRMATPQGRKTIRNRRKKGRKNLTLRR) are disordered. Residues 31–48 (KTIRNRRKKGRKNLTLRR) show a composition bias toward basic residues.

This sequence belongs to the bacterial ribosomal protein bL34 family.

The protein localises to the plastid. The protein resides in the chloroplast. The polypeptide is Large ribosomal subunit protein bL34c (Phaeodactylum tricornutum (strain CCAP 1055/1)).